A 283-amino-acid polypeptide reads, in one-letter code: Putative pyruvate, phosphate dikinase regulatory protein (283 aa).

Gly156 to Thr163 lines the ADP pocket.

Belongs to the pyruvate, phosphate/water dikinase regulatory protein family. PDRP subfamily.

It catalyses the reaction N(tele)-phospho-L-histidyl/L-threonyl-[pyruvate, phosphate dikinase] + ADP = N(tele)-phospho-L-histidyl/O-phospho-L-threonyl-[pyruvate, phosphate dikinase] + AMP + H(+). It carries out the reaction N(tele)-phospho-L-histidyl/O-phospho-L-threonyl-[pyruvate, phosphate dikinase] + phosphate + H(+) = N(tele)-phospho-L-histidyl/L-threonyl-[pyruvate, phosphate dikinase] + diphosphate. Its function is as follows. Bifunctional serine/threonine kinase and phosphorylase involved in the regulation of the pyruvate, phosphate dikinase (PPDK) by catalyzing its phosphorylation/dephosphorylation. This Desulfotalea psychrophila (strain LSv54 / DSM 12343) protein is Putative pyruvate, phosphate dikinase regulatory protein.